The sequence spans 87 residues: uncharacterized protein (87 aa).

The first 26 residues, M1–A26, serve as a signal peptide directing secretion. 3 disulfide bridges follow: C61-C75, C68-C79, and C74-C84.

It localises to the secreted. This is an uncharacterized protein from Schistosoma japonicum (Blood fluke).